Consider the following 1823-residue polypeptide: AF4/FMR2 family member lilli (1823 aa).

The span at 1–41 (MAQQQQQQHQQQQHHQQQQQQLQQQQQLLQYNNNSYNLNYN) shows a compositional bias: low complexity. Disordered regions lie at residues 1 to 87 (MAQQ…DPEI), 126 to 305 (GFGS…ENHI), 422 to 544 (QQLT…KKKY), 570 to 626 (AGPG…WHLS), 686 to 712 (DSRH…YGVG), 753 to 1057 (PKNQ…DIPT), 1071 to 1287 (AAAQ…LKPR), 1322 to 1350 (ARQH…GART), 1413 to 1448 (FMLK…AEQL), 1480 to 1531 (ENSA…AIAS), 1547 to 1567 (TCSE…APRL), and 1715 to 1744 (GNTP…IVPQ). The segment covering 53-79 (REKYERQQGIQSDDRETSLFGEPRRLN) has biased composition (basic and acidic residues). 3 stretches are compositionally biased toward low complexity: residues 126–147 (GFGS…SSAS), 156–174 (QQQQ…QQQQ), and 205–249 (PSSS…TSSP). The segment covering 426 to 438 (PTPPKASPTPPVI) has biased composition (pro residues). Residue threonine 434 is modified to Phosphothreonine. Positions 441-454 (LKTEKNHSLEKQDS) are enriched in basic and acidic residues. The segment covering 456-466 (LENDLELSESD) has biased composition (acidic residues). Phosphoserine occurs at positions 463 and 465. Low complexity predominate over residues 475–531 (SAGNSSNSSESDSSESGSEASSKGDPQQQQQQQQQHLLHQQQQHQQQQLLLQQQQQQ). Residues 582–598 (AAGGVGSGSGSTGGGSS) show a composition bias toward gly residues. Residues 599–612 (SSGMGTMSSSNSSN) show a composition bias toward low complexity. Low complexity predominate over residues 764–785 (SDSGSGSSGSGSSSSDSAGGSS). The segment covering 818-827 (HKAQPNSVTL) has biased composition (polar residues). The span at 839-849 (PRQKKPRKKKM) shows a compositional bias: basic residues. A phosphoserine mark is found at serine 859 and serine 860. Composition is skewed to low complexity over residues 877 to 906 (AATA…AAPA), 917 to 947 (QAQQ…SSQA), 962 to 979 (GTAS…VAAG), 1002 to 1057 (AAMA…DIPT), and 1102 to 1161 (NSSN…QLLQ). The segment at residues 908 to 920 (KKGRGRPRKQAQQ) is a DNA-binding region (a.T hook). Phosphoserine occurs at positions 939 and 941. Over residues 1172 to 1181 (TLKQSAQQRL) the composition is skewed to polar residues. Low complexity-rich tracts occupy residues 1182–1203 (SSSD…ASSS) and 1253–1280 (QQQQ…QQQQ). Polar residues predominate over residues 1334-1344 (TQQNGHLSSRS). Polar residues predominate over residues 1480-1496 (ENSANASPNKLQQQNAR). Residue serine 1486 is modified to Phosphoserine. Residues 1497–1531 (QLPLSQSQLQHQHQHQHQLQQQQSQSTATGHAIAS) show a composition bias toward low complexity. A compositionally biased stretch (pro residues) spans 1555 to 1565 (TPPPAAPPPAP). A compositionally biased stretch (low complexity) spans 1715 to 1735 (GNTPSSISPSNSVGSQGSGSN).

It belongs to the AF4 family.

Its subcellular location is the nucleus. Has a role in transcriptional regulation. Acts in parallel with the Ras/MAPK and the PI3K/PKB pathways in the control of cell identity and cellular growth. Essential for regulation of the cytoskeleton and cell growth but not for cell proliferation or growth rate. Required specifically for the microtubule-based basal transport of lipid droplets. Plays a partially redundant function downstream of Raf in cell fate specification in the developing eye. Pair-rule protein that regulates embryonic cellularization, gastrulation and segmentation. This Drosophila virilis (Fruit fly) protein is AF4/FMR2 family member lilli.